A 246-amino-acid chain; its full sequence is Auxin-responsive protein IAA11 (246 aa).

An EAR-like (transcriptional repression) motif is present at residues 36 to 40; it reads LGLTL. Residues 136 to 235 enclose the PB1 domain; the sequence is SMFVKVTMDG…SVRRLRIMKT (100 aa).

Belongs to the Aux/IAA family. In terms of assembly, homodimers and heterodimers. Interacts with TPL. As to expression, preferentially expressed in stems and flowers.

It is found in the nucleus. Functionally, aux/IAA proteins are short-lived transcriptional factors that function as repressors of early auxin response genes at low auxin concentrations. Repression is thought to result from the interaction with auxin response factors (ARFs), proteins that bind to the auxin-responsive promoter element (AuxRE). Formation of heterodimers with ARF proteins may alter their ability to modulate early auxin response genes expression. The protein is Auxin-responsive protein IAA11 (IAA11) of Arabidopsis thaliana (Mouse-ear cress).